The sequence spans 318 residues: Pheromone-regulated membrane protein 5 (318 aa).

The interval 15 to 56 (TTSTSSTTTASSSSTITSVXSSSSSLPLLSNSTSSSIIPSIT) is disordered. A helical membrane pass occupies residues 78–98 (FIVVGGIAGVIFLAILLWWVI). A Phosphoserine modification is found at Ser-129. A compositionally biased stretch (low complexity) spans 238-247 (TISSSSASSL). Positions 238–318 (TISSSSASSL…HMLEGKEQDE (81 aa)) are disordered. The span at 250-261 (GNEKEVGEDIRK) shows a compositional bias: basic and acidic residues. A compositionally biased stretch (polar residues) spans 276 to 285 (SPESDGSVNR). Ser-279, Ser-282, and Ser-288 each carry phosphoserine. The span at 309-318 (HMLEGKEQDE) shows a compositional bias: basic and acidic residues. Lys-314 participates in a covalent cross-link: Glycyl lysine isopeptide (Lys-Gly) (interchain with G-Cter in ubiquitin).

The protein belongs to the PRM5 family.

Its subcellular location is the membrane. The chain is Pheromone-regulated membrane protein 5 (PRM5) from Saccharomyces cerevisiae (strain Lalvin QA23) (Baker's yeast).